The following is a 165-amino-acid chain: Endoribonuclease YbeY (165 aa).

Zn(2+)-binding residues include His-131, His-135, and His-141.

The protein belongs to the endoribonuclease YbeY family. Requires Zn(2+) as cofactor.

Its subcellular location is the cytoplasm. Its function is as follows. Single strand-specific metallo-endoribonuclease involved in late-stage 70S ribosome quality control and in maturation of the 3' terminus of the 16S rRNA. In Lachnoclostridium phytofermentans (strain ATCC 700394 / DSM 18823 / ISDg) (Clostridium phytofermentans), this protein is Endoribonuclease YbeY.